Reading from the N-terminus, the 893-residue chain is Dolichyl-phosphate-mannose--protein mannosyltransferase 1 (893 aa).

7 consecutive transmembrane segments (helical) span residues 29 to 49 (FSFL…CVRA), 77 to 97 (LLMD…AALT), 124 to 144 (LFTC…VYFP), 147 to 167 (SKTA…LITM), 170 to 190 (YIMI…YWSV), 224 to 244 (AMFT…NLLG), and 258 to 278 (FSYI…VFAV). Positions 310-364 (FADVAYGSLVTIRNAIPEHGYLHSSELLYPEGTEQQIISLVDEPNQNALWIIEHE) constitute an MIR 1 domain. A glycan (N-linked (GlcNAc...) asparagine) is linked at Asn-370. 2 consecutive MIR domains span residues 374–433 (IELL…IQIL) and 443–499 (NGTV…IESN). The N-linked (GlcNAc...) asparagine glycan is linked to Asn-443. Position 451 is a phosphothreonine (Thr-451). Helical transmembrane passes span 573–593 (FVWY…IFCL), 610–630 (YNYN…PYIL), and 643–663 (ALYF…NAVF). N-linked (GlcNAc...) asparagine glycosylation is present at Asn-665. A helical membrane pass occupies residues 671 to 691 (ALSVIIMALMFLVYRLYSPFT). Asn-720 is a glycosylation site (N-linked (GlcNAc...) asparagine). The interval 785–893 (KAEQEAREAA…VAESAQARVE (109 aa)) is disordered. The span at 786–806 (AEQEAREAAEKAASEAAERSS) shows a compositional bias: basic and acidic residues. Composition is skewed to low complexity over residues 807–823 (SEAA…AASV) and 854–864 (MEAAALNNAAE). Positions 868 to 878 (VVGSSPESVAS) are enriched in polar residues.

It belongs to the glycosyltransferase 39 family.

The protein localises to the endoplasmic reticulum membrane. Its subcellular location is the nucleus membrane. The enzyme catalyses a di-trans,poly-cis-dolichyl beta-D-mannosyl phosphate + L-seryl-[protein] = 3-O-(alpha-D-mannosyl)-L-seryl-[protein] + a di-trans,poly-cis-dolichyl phosphate + H(+). The catalysed reaction is a di-trans,poly-cis-dolichyl beta-D-mannosyl phosphate + L-threonyl-[protein] = 3-O-(alpha-D-mannosyl)-L-threonyl-[protein] + a di-trans,poly-cis-dolichyl phosphate + H(+). It functions in the pathway protein modification; protein glycosylation. In terms of biological role, transfers mannose from Dol-P-mannose to Ser or Thr residues on proteins. Required for normal cell growth and septum formation. Shown to actively O-mannosylate wsc1. The protein is Dolichyl-phosphate-mannose--protein mannosyltransferase 1 (ogm1) of Schizosaccharomyces pombe (strain 972 / ATCC 24843) (Fission yeast).